A 674-amino-acid polypeptide reads, in one-letter code: Probable L-type lectin-domain containing receptor kinase I.5 (674 aa).

The N-terminal stretch at 1–22 is a signal peptide; that stretch reads MSKGLFLIWLISSFHLISFSTS. Residues 23 to 286 are Extracellular-facing; that stretch reads SKDTSFVFNG…RPRAEHKKVQ (264 aa). The interval 25–258 is legume-lectin like; sequence DTSFVFNGFG…YHYLLGWSFS (234 aa). Asn-124, Asn-181, Asn-185, Asn-204, and Asn-225 each carry an N-linked (GlcNAc...) asparagine glycan. A helical transmembrane segment spans residues 287 to 307; the sequence is FALIIALPVILAIVVMAVLAG. Topologically, residues 308-674 are cytoplasmic; the sequence is VYYHRKKKYA…DHEQPLEFKS (367 aa). The 282-residue stretch at 344–625 folds into the Protein kinase domain; it reads FHKDRFLGRG…LPLPDFSPYT (282 aa). ATP is bound by residues 350-358 and Lys-372; that span reads LGRGGFGEV. Catalysis depends on Asp-468, which acts as the Proton acceptor. Low complexity predominate over residues 649-662; sequence NWSAPSASSSSANN. The segment at 649–674 is disordered; it reads NWSAPSASSSSANNSKDHEQPLEFKS. Basic and acidic residues predominate over residues 663–674; it reads SKDHEQPLEFKS.

This sequence in the C-terminal section; belongs to the protein kinase superfamily. Ser/Thr protein kinase family. The protein in the N-terminal section; belongs to the leguminous lectin family.

The protein localises to the cell membrane. The enzyme catalyses L-seryl-[protein] + ATP = O-phospho-L-seryl-[protein] + ADP + H(+). It catalyses the reaction L-threonyl-[protein] + ATP = O-phospho-L-threonyl-[protein] + ADP + H(+). The protein is Probable L-type lectin-domain containing receptor kinase I.5 (LECRK15) of Arabidopsis thaliana (Mouse-ear cress).